We begin with the raw amino-acid sequence, 149 residues long: Nucleoside diphosphate kinase 1 (149 aa).

Positions 9, 57, 85, 91, 102, and 112 each coordinate ATP. Catalysis depends on His115, which acts as the Pros-phosphohistidine intermediate.

The protein belongs to the NDK family. As to quaternary structure, homohexamer. Can also form dodecamers. Mg(2+) is required as a cofactor.

It is found in the nucleus. It catalyses the reaction a 2'-deoxyribonucleoside 5'-diphosphate + ATP = a 2'-deoxyribonucleoside 5'-triphosphate + ADP. It carries out the reaction a ribonucleoside 5'-diphosphate + ATP = a ribonucleoside 5'-triphosphate + ADP. Major role in the synthesis of nucleoside triphosphates other than ATP. The ATP gamma phosphate is transferred to the NDP beta phosphate via a ping-pong mechanism, using a phosphorylated active-site intermediate. Involved in transcription regulation. Has G-quadruplex (G4) DNA-binding activity, which is independent of its nucleotide-binding and kinase activity. Binds folded G4 with low nanomolar affinity and corresponding unfolded G-rich DNA more weakly. Stabilizes folded G4s regardless of whether they are prefolded or not. This Zea mays (Maize) protein is Nucleoside diphosphate kinase 1.